A 479-amino-acid chain; its full sequence is Protein phosphatase 1B (479 aa).

Over residues 1 to 14 (MGAFLDKPKTEKHN) the composition is skewed to basic and acidic residues. Residues 1–20 (MGAFLDKPKTEKHNAHGAGN) are disordered. Gly-2 carries N-myristoyl glycine lipidation. Lys-12 is covalently cross-linked (Glycyl lysine isopeptide (Lys-Gly) (interchain with G-Cter in ISG15)). One can recognise a PPM-type phosphatase domain in the interval 23-295 (RYGLSSMQGW…DNMSIVLVCF (273 aa)). The Mn(2+) site is built by Asp-60 and Gly-61. Lys-142 is covalently cross-linked (Glycyl lysine isopeptide (Lys-Gly) (interchain with G-Cter in ISG15)). Mn(2+) contacts are provided by Asp-243 and Asp-286. The residue at position 386 (Ser-386) is a Phosphoserine. The segment at 423–479 (VEGEESPAEPAATATSSNSDAGNPVTMQESHTESESGLAELDSSNEDAGTKMSGEKI) is disordered. Positions 430 to 439 (AEPAATATSS) are enriched in low complexity. Residues 440–451 (NSDAGNPVTMQE) are compositionally biased toward polar residues.

This sequence belongs to the PP2C family. As to quaternary structure, monomer. Interacts with PAK6. Interacts with the phosphorylated form of IKBKB/IKKB. Requires Mg(2+) as cofactor. Mn(2+) is required as a cofactor. In terms of processing, isgylation negatively regulates its activity. Post-translationally, N-myristoylation is essential for the recognition of its substrates for dephosphorylation. In terms of tissue distribution, highly expressed in heart and skeletal muscle.

It localises to the cytoplasm. The protein localises to the cytosol. Its subcellular location is the membrane. The enzyme catalyses O-phospho-L-seryl-[protein] + H2O = L-seryl-[protein] + phosphate. It catalyses the reaction O-phospho-L-threonyl-[protein] + H2O = L-threonyl-[protein] + phosphate. Its function is as follows. Enzyme with a broad specificity. Dephosphorylates CDK2 and CDK6 in vitro. Dephosphorylates PRKAA1 and PRKAA2. Inhibits TBK1-mediated antiviral signaling by dephosphorylating it at 'Ser-172'. Plays an important role in the termination of TNF-alpha-mediated NF-kappa-B activation through dephosphorylating and inactivating IKBKB/IKKB. The chain is Protein phosphatase 1B (PPM1B) from Homo sapiens (Human).